The chain runs to 370 residues: A-type ATP synthase subunit C (370 aa).

The protein belongs to the V-ATPase V0D/AC39 subunit family. In terms of assembly, has multiple subunits with at least A(3), B(3), C, D, E, F, H, I and proteolipid K(x).

It is found in the cell membrane. Functionally, component of the A-type ATP synthase that produces ATP from ADP in the presence of a proton gradient across the membrane. In Pyrococcus abyssi (strain GE5 / Orsay), this protein is A-type ATP synthase subunit C.